A 522-amino-acid chain; its full sequence is Colicin-E1 (522 aa).

Disordered stretches follow at residues 26–52 (NGTP…AAIH) and 136–165 (EEKA…REKA). Over residues 30–42 (DGSGSGGGGGKGG) the composition is skewed to gly residues. 2 consecutive transmembrane segments (helical) span residues 471 to 487 (AADA…FSLL) and 494 to 510 (IWGI…YIDK).

It belongs to the channel forming colicin family.

It is found in the cell membrane. Functionally, this colicin is a channel-forming colicin. This class of transmembrane toxins depolarize the cytoplasmic membrane, leading to dissipation of cellular energy. Colicins are polypeptide toxins produced by and active against E.coli and closely related bacteria. This is Colicin-E1 (cea) from Escherichia coli.